A 477-amino-acid polypeptide reads, in one-letter code: Ribulose bisphosphate carboxylase large chain (477 aa).

A propeptide spanning residues 1–2 is cleaved from the precursor; the sequence is MS. N-acetylproline is present on proline 3. Substrate contacts are provided by asparagine 123 and threonine 173. The active-site Proton acceptor is lysine 175. A substrate-binding site is contributed by lysine 177. Mg(2+)-binding residues include lysine 201, aspartate 203, and glutamate 204. At lysine 201 the chain carries N6-carboxylysine. Catalysis depends on histidine 294, which acts as the Proton acceptor. Arginine 295, histidine 327, and serine 379 together coordinate substrate.

The protein belongs to the RuBisCO large chain family. Type I subfamily. As to quaternary structure, heterohexadecamer of 8 large chains and 8 small chains; disulfide-linked. The disulfide link is formed within the large subunit homodimers. Mg(2+) serves as cofactor. The disulfide bond which can form in the large chain dimeric partners within the hexadecamer appears to be associated with oxidative stress and protein turnover.

It localises to the plastid. Its subcellular location is the chloroplast. It catalyses the reaction 2 (2R)-3-phosphoglycerate + 2 H(+) = D-ribulose 1,5-bisphosphate + CO2 + H2O. It carries out the reaction D-ribulose 1,5-bisphosphate + O2 = 2-phosphoglycolate + (2R)-3-phosphoglycerate + 2 H(+). In terms of biological role, ruBisCO catalyzes two reactions: the carboxylation of D-ribulose 1,5-bisphosphate, the primary event in carbon dioxide fixation, as well as the oxidative fragmentation of the pentose substrate in the photorespiration process. Both reactions occur simultaneously and in competition at the same active site. This is Ribulose bisphosphate carboxylase large chain from Avena sativa (Oat).